The chain runs to 189 residues: Apolipoprotein D (189 aa).

Residues 1–21 form the signal peptide; sequence MAPTLLLLLPALAGLISVAQG. Residue Gln-22 is modified to Pyrrolidone carboxylic acid. 2 disulfides stabilise this stretch: Cys-29/Cys-135 and Cys-62/Cys-186. N-linked (GlcNAc...) asparagine glycans are attached at residues Asn-66 and Asn-99.

The protein belongs to the calycin superfamily. Lipocalin family. As to quaternary structure, homodimer. In terms of tissue distribution, most heavily expressed in adrenal gland, lung, brain, testis and spleen.

The protein resides in the secreted. Its function is as follows. APOD occurs in the macromolecular complex with lecithin-transport and binding of bilin. Appears to be able to transport a variety of ligands in a number of different contexts. This chain is Apolipoprotein D (APOD), found in Oryctolagus cuniculus (Rabbit).